A 199-amino-acid polypeptide reads, in one-letter code: V-type proton ATPase subunit E (199 aa).

This sequence belongs to the V-ATPase E subunit family.

In terms of biological role, produces ATP from ADP in the presence of a proton gradient across the membrane. This chain is V-type proton ATPase subunit E, found in Clostridium botulinum (strain Okra / Type B1).